The primary structure comprises 145 residues: 3-dehydroquinate dehydratase (145 aa).

Y23 acts as the Proton acceptor in catalysis. Positions 74, 80, and 87 each coordinate substrate. H100 serves as the catalytic Proton donor. Substrate is bound by residues 101–102 (IS) and R111.

The protein belongs to the type-II 3-dehydroquinase family. As to quaternary structure, homododecamer.

It carries out the reaction 3-dehydroquinate = 3-dehydroshikimate + H2O. The protein operates within metabolic intermediate biosynthesis; chorismate biosynthesis; chorismate from D-erythrose 4-phosphate and phosphoenolpyruvate: step 3/7. In terms of biological role, catalyzes a trans-dehydration via an enolate intermediate. In Mycobacterium leprae (strain Br4923), this protein is 3-dehydroquinate dehydratase.